The sequence spans 456 residues: Chromosomal replication initiator protein DnaA (456 aa).

Residues 1-83 form a domain I, interacts with DnaA modulators region; it reads MKLKILHFTS…DAFEEESNNG (83 aa). A domain II region spans residues 83–116; that stretch reads GVRPEIHIKVKEKKENVKSLKNNKSMLYFNTNGL. The domain III, AAA+ region stretch occupies residues 117-331; it reads SLNPFYTFEN…GILSTINAHI (215 aa). The ATP site is built by Gly-161, Gly-163, Lys-164, and Thr-165. The tract at residues 332 to 456 is domain IV, binds dsDNA; it reads NLSPESSSLK…SKIQQSLDSV (125 aa).

Belongs to the DnaA family. As to quaternary structure, oligomerizes as a right-handed, spiral filament on DNA at oriC.

The protein resides in the cytoplasm. Its function is as follows. Plays an essential role in the initiation and regulation of chromosomal replication. ATP-DnaA binds to the origin of replication (oriC) to initiate formation of the DNA replication initiation complex once per cell cycle. Binds the DnaA box (a 9 base pair repeat at the origin) and separates the double-stranded (ds)DNA. Forms a right-handed helical filament on oriC DNA; dsDNA binds to the exterior of the filament while single-stranded (ss)DNA is stabiized in the filament's interior. The ATP-DnaA-oriC complex binds and stabilizes one strand of the AT-rich DNA unwinding element (DUE), permitting loading of DNA polymerase. After initiation quickly degrades to an ADP-DnaA complex that is not apt for DNA replication. Binds acidic phospholipids. This Helicobacter hepaticus (strain ATCC 51449 / 3B1) protein is Chromosomal replication initiator protein DnaA.